A 425-amino-acid chain; its full sequence is D-tagatose 6-phosphate 4-epimerase (425 aa).

It belongs to the GatZ/KbaZ family.

The catalysed reaction is keto-D-tagatose 6-phosphate = keto-D-fructose 6-phosphate. It participates in carbohydrate metabolism. In terms of biological role, involved in galactitol and D-altritol catabolism. Catalyzes the epimerization of D-tagatose 6-phosphate to D-fructose 6-phosphate. The protein is D-tagatose 6-phosphate 4-epimerase of Agrobacterium fabrum (strain C58 / ATCC 33970) (Agrobacterium tumefaciens (strain C58)).